Consider the following 1038-residue polypeptide: Translation initiation factor IF-2 (1038 aa).

The interval 32–442 (GSALASLSDE…RKGVNTAAPR (411 aa)) is disordered. Composition is skewed to low complexity over residues 65 to 77 (PPTK…PVAP), 100 to 113 (PAEA…PAQP), and 131 to 147 (PKLA…APAA). Composition is skewed to basic and acidic residues over residues 204 to 217 (SGGR…KRES) and 275 to 295 (RSLD…DAGK). The segment covering 311–328 (PSAPAKPAAPTGSSGPAA) has biased composition (low complexity). Residues 331–344 (PDIKLTRDVIEGHK) show a composition bias toward basic and acidic residues. The span at 422–435 (HHYRRSRPRIRRKG) shows a compositional bias: basic residues. The tr-type G domain occupies 529-696 (ARPPVVTFLG…TLLTIAELNE (168 aa)). The tract at residues 538–545 (GHVDHGKT) is G1. 538–545 (GHVDHGKT) serves as a coordination point for GTP. Residues 563 to 567 (GITQH) form a G2 region. Residues 584–587 (DTPG) form a G3 region. GTP contacts are provided by residues 584 to 588 (DTPGH) and 638 to 641 (NKID). A G4 region spans residues 638–641 (NKID). Residues 674–676 (SAT) are G5.

The protein belongs to the TRAFAC class translation factor GTPase superfamily. Classic translation factor GTPase family. IF-2 subfamily.

The protein localises to the cytoplasm. Its function is as follows. One of the essential components for the initiation of protein synthesis. Protects formylmethionyl-tRNA from spontaneous hydrolysis and promotes its binding to the 30S ribosomal subunits. Also involved in the hydrolysis of GTP during the formation of the 70S ribosomal complex. The protein is Translation initiation factor IF-2 of Rhodopirellula baltica (strain DSM 10527 / NCIMB 13988 / SH1).